The following is a 355-amino-acid chain: Protein RecA (355 aa).

78-85 (GPESSGKT) serves as a coordination point for ATP.

It belongs to the RecA family.

The protein resides in the cytoplasm. Can catalyze the hydrolysis of ATP in the presence of single-stranded DNA, the ATP-dependent uptake of single-stranded DNA by duplex DNA, and the ATP-dependent hybridization of homologous single-stranded DNAs. It interacts with LexA causing its activation and leading to its autocatalytic cleavage. The protein is Protein RecA of Rhodobacter capsulatus (Rhodopseudomonas capsulata).